Here is a 56-residue protein sequence, read N- to C-terminus: Ovomucoid (56 aa).

The region spanning 6 to 56 (VDCSEYPKPACTLEYRPLCGSDNKTYANKCNFCNAVVESNGTLTLSHFGKC) is the Kazal-like domain. Cystine bridges form between Cys-8–Cys-38, Cys-16–Cys-35, and Cys-24–Cys-56. N-linked (GlcNAc...) asparagine glycosylation is present at Asn-45.

The protein localises to the secreted. This chain is Ovomucoid, found in Callipepla californica (California quail).